The chain runs to 596 residues: MMRTHYCGQVTEILENQQVTVSGWVHRRRDHGGVIFIDLRDREGLVQVVVNPDNAEMFAIAERVRSEYVLKVEGKVCARTPETINPKMNTGKIEIVAESLEVLSSAEPIPFQLDDKHISEEVRLTYRYLDLRREEMQSTMRTRYRVTRSMRRYLDDNGFMDMETPILTKSTPEGARDYLVPSRTHPNKFFALPQSPQLFKQLLMMSGFDRYYQITRCFRDEDLRADRQPEFTQLDIETSFMTEEEVMNMMEGLTKTIFREGVDVNFEDDFPRMTYAEAIEKYGIDRPDLRIPLQLVDVADLLQDIDFKVFAGPAKDPMGRVAALRVPQGGKLSRKEIDDYTKYVGIYGAKGLAYIKVNDLSAGLDGLQSPIVKFFPDQAMEIMQRVGAEDGDIVFFGADNAKIVNEALGALRCKIGEDLDMIEKEWAPVWVVDFPMFEMDEKTAKMTAIHHPFTQPKATTEEILNHDEPHQMLSRAYDLVINGIEVGGGSVRIHDTHMQAAVLKMLGISDEDAQEKFGFLLNALKYGCPPHAGMAFGLDRLVMLMAKRDSIRDVIAFPKTQSAACMLTDAPGNVDNTQLADLELRFRKSLVAKDAS.

Residue Glu173 participates in L-aspartate binding. Residues 197–200 are aspartate; it reads QLFK. Residue Arg219 coordinates L-aspartate. ATP is bound by residues 219-221 and Gln228; that span reads RDE. An L-aspartate-binding site is contributed by His450. Glu485 is a binding site for ATP. Position 492 (Arg492) interacts with L-aspartate. 537–540 is an ATP binding site; that stretch reads GLDR.

It belongs to the class-II aminoacyl-tRNA synthetase family. Type 1 subfamily. Homodimer.

It is found in the cytoplasm. The catalysed reaction is tRNA(Asx) + L-aspartate + ATP = L-aspartyl-tRNA(Asx) + AMP + diphosphate. Its function is as follows. Aspartyl-tRNA synthetase with relaxed tRNA specificity since it is able to aspartylate not only its cognate tRNA(Asp) but also tRNA(Asn). Reaction proceeds in two steps: L-aspartate is first activated by ATP to form Asp-AMP and then transferred to the acceptor end of tRNA(Asp/Asn). The chain is Aspartate--tRNA(Asp/Asn) ligase from Hydrogenovibrio crunogenus (strain DSM 25203 / XCL-2) (Thiomicrospira crunogena).